Here is a 156-residue protein sequence, read N- to C-terminus: 2-C-methyl-D-erythritol 2,4-cyclodiphosphate synthase (156 aa).

The a divalent metal cation site is built by Asp8 and His10. 4-CDP-2-C-methyl-D-erythritol 2-phosphate is bound by residues 8–10 (DVH) and 34–35 (HS). Residue His42 participates in a divalent metal cation binding. 4-CDP-2-C-methyl-D-erythritol 2-phosphate-binding positions include 56–58 (DIG), 61–65 (FPDTD), 100–106 (AQRPKMA), 132–135 (TTEE), and Phe139.

This sequence belongs to the IspF family. Homotrimer. The cofactor is a divalent metal cation.

The catalysed reaction is 4-CDP-2-C-methyl-D-erythritol 2-phosphate = 2-C-methyl-D-erythritol 2,4-cyclic diphosphate + CMP. It participates in isoprenoid biosynthesis; isopentenyl diphosphate biosynthesis via DXP pathway; isopentenyl diphosphate from 1-deoxy-D-xylulose 5-phosphate: step 4/6. In terms of biological role, involved in the biosynthesis of isopentenyl diphosphate (IPP) and dimethylallyl diphosphate (DMAPP), two major building blocks of isoprenoid compounds. Catalyzes the conversion of 4-diphosphocytidyl-2-C-methyl-D-erythritol 2-phosphate (CDP-ME2P) to 2-C-methyl-D-erythritol 2,4-cyclodiphosphate (ME-CPP) with a corresponding release of cytidine 5-monophosphate (CMP). The polypeptide is 2-C-methyl-D-erythritol 2,4-cyclodiphosphate synthase (Clostridium perfringens (strain ATCC 13124 / DSM 756 / JCM 1290 / NCIMB 6125 / NCTC 8237 / Type A)).